A 34-amino-acid chain; its full sequence is Thermomycolin (34 aa).

The Charge relay system role is filled by Ser33.

This sequence belongs to the peptidase S8 family.

Its subcellular location is the secreted. The enzyme catalyses Rather non-specific hydrolysis of proteins. Preferential cleavage: -Ala-|-Xaa-, -Tyr-|-Xaa-, -Phe-|-Xaa- in small molecular substrates.. This is an extracellular proteinase with a general specificity for apolar residues. This Malbranchea cinnamomea (Thermophilic fungus) protein is Thermomycolin.